A 528-amino-acid chain; its full sequence is uncharacterized protein (528 aa).

2 stretches are compositionally biased toward basic residues: residues Met-1–Leu-16 and Gln-25–Lys-43. The disordered stretch occupies residues Met-1–Asp-59.

Belongs to the NOC2 family.

The protein resides in the nucleus. It is found in the nucleolus. This is an uncharacterized protein from Schizosaccharomyces pombe (strain 972 / ATCC 24843) (Fission yeast).